Reading from the N-terminus, the 22-residue chain is Mu-conotoxin KIIIB (22 aa).

Positions 1–2 (KR) are excised as a propeptide. 7 disulfide bridges follow: Cys5/Cys13, Cys5/Cys19, Cys5/Cys20, Cys6/Cys13, Cys6/Cys19, Cys8/Cys19, and Cys8/Cys20. Pharmacophore key residues stretches follow at residues 14-16 (RDH) and 18-19 (RC). A Cysteine amide modification is found at Cys20.

The protein belongs to the conotoxin M superfamily. In terms of assembly, monomer. In terms of processing, toxins with three different disulfide connectivities have been synthesized. The conotoxin mu-KIIIA-P1 shows the connectivity C1-C5, C2-C4, and C3-C6, whereas mu-KIIIA-P2 shows the connectivity C1-C6, C2-C4, and C3-C5. The conotoxin mu-KIIIA-N has the 'native' fold of the mu-conotoxin family (C1-C4, C2-C5, and C3-C6). Mu-KIIIA-P1 and mu-KIIIA-P2 are obtained by both thermodynamic oxidative folding and regioselective synthesis. Mu-KIIIA-P1 is the major oxidative folding product. Mu-KIIIA-N is only obtained by regioselective synthesis. Expressed by the venom duct.

It localises to the secreted. In terms of biological role, mu-conotoxin KIIIA-P1: mu-conotoxins block voltage-gated sodium channels (Nav). This toxin potently blocks Nav1.2/SCN2A (IC(50)5-124 nM), Nav1.4/SCN4A (IC(50)=20-90 nM), and Nav1.7/SCN9A (IC(50)=290-413 nM). It moderately blocks Nav1.1/SCN1A, and mNav1.6/SCN8A. It also shows a very low activity on Nav1.3/SCN3A. This toxin binds a microsite within the pore different from the tetrodotoxin binding site 1 (tested on Nav1.2). The block is partial, with a residual current that can be completely blocked by TTX. The toxin probably docks at a more superficial site in the outer vestibule of the channel than does TTX. On rNav1.2/SCN2A, it produces a block that is only partially reversible. The block of Nav1.7 is modified when beta-subunits are coexpressed with the alpha subunit. Hence, blocks of channels containing beta-1 and beta-3 subunits are more potent (compared to channels without beta subunits), whereas blocks of channels containing beta-2 and beta-4 subunits are less potent (compared to channels without beta subunits). Mu-conotoxin KIIIA-P2: This toxin potently blocks Nav1.2/SCN2A (Kd=230 nM, IC(50)=1.37 uM) and Nav1.4/SCN4A (Kd=830 nM, IC(50)=2 uM). It also moderately blocks Nav1.7/SCN9A (Kd=1.57 uM, IC(50)=5.4 uM). In addition, this toxin may also inhibit other sodium channels, as does Mu-conotoxin KIIIA-P1. Functionally, mu-conotoxin KIIIA-N: This toxin moderately blocks Nav1.2/SCN2A (IC(50)=875 nM), Nav1.4/SCN4A (IC(50)=472 nM), and Nav1.7/SCN9A (IC(50)=887 nM). Its function is as follows. Mu-conotoxin KIIIB-P1: This toxin potently blocks Nav1.2/SCN2A (Kd=470 nM). In addition, this toxin may also inhibit other sodium channels, as does Mu-conotoxin KIIIA-P1. In terms of biological role, mu-conotoxin KIIIB-P2: This toxin potently blocks Nav1.2/SCN2A (Kd=26 nM). In addition, this toxin may also inhibit other sodium channels, as does Mu-conotoxin KIIIA-P1. This Conus kinoshitai (Kinoshita's cone) protein is Mu-conotoxin KIIIB.